A 160-amino-acid polypeptide reads, in one-letter code: Cytochrome b6-f complex subunit 4 (160 aa).

3 helical membrane passes run 36–56 (LLYI…GLAV), 95–115 (LLGI…PFIE), and 128–148 (IAMA…IGAC).

It belongs to the cytochrome b family. PetD subfamily. As to quaternary structure, the 4 large subunits of the cytochrome b6-f complex are cytochrome b6, subunit IV (17 kDa polypeptide, PetD), cytochrome f and the Rieske protein, while the 4 small subunits are PetG, PetL, PetM and PetN. The complex functions as a dimer.

It localises to the cellular thylakoid membrane. Its function is as follows. Component of the cytochrome b6-f complex, which mediates electron transfer between photosystem II (PSII) and photosystem I (PSI), cyclic electron flow around PSI, and state transitions. This is Cytochrome b6-f complex subunit 4 from Prochlorococcus marinus (strain MIT 9303).